A 229-amino-acid polypeptide reads, in one-letter code: ACD11 homolog protein (229 aa).

An N-acylsphingoid base 1-phosphate contacts are provided by E84, K88, R123, R127, and H166.

It belongs to the GLTP family.

The chain is ACD11 homolog protein from Arabidopsis thaliana (Mouse-ear cress).